Reading from the N-terminus, the 351-residue chain is RISC-loading complex subunit tarbp2 (351 aa).

The disordered stretch occupies residues 1-22; that stretch reads MSENGDCEHQTSSGFPSIEQML. DRBM domains lie at 29–96 and 150–218; these read TPIS…LLKE and NPVG…QIHQ. The disordered stretch occupies residues 221–243; that stretch reads AEHRESGETEPEEDQFSVGKLDG. Residues 278-346 form the DRBM 3 domain; it reads GFCSLLQDLS…AHNALQYLKI (69 aa).

This sequence belongs to the TARBP2 family. In terms of assembly, self-associates. Component of the RISC loading complex (RLC), or micro-RNA (miRNA) loading complex (miRLC), which is composed of dicer1, ago2 and tarbp2. Note that the trimeric RLC/miRLC is also referred to as RISC.

Its subcellular location is the cytoplasm. Required for formation of the RNA induced silencing complex (RISC). Component of the RISC loading complex (RLC), also known as the micro-RNA (miRNA) loading complex (miRLC), which is composed of dicer1, ago2 and tarbp2. Within the RLC/miRLC, dicer1 and tarbp2 are required to process precursor miRNAs (pre-miRNAs) to mature miRNAs and then load them onto ago2. ago2 bound to the mature miRNA constitutes the minimal RISC and may subsequently dissociate from dicer1 and tarbp2. May also play a role in the production of short interfering RNAs (siRNAs) from double-stranded RNA (dsRNA) by dicer1. In Xenopus laevis (African clawed frog), this protein is RISC-loading complex subunit tarbp2 (tarbp2).